The primary structure comprises 147 residues: Large ribosomal subunit protein uL13 (147 aa).

The protein belongs to the universal ribosomal protein uL13 family. In terms of assembly, part of the 50S ribosomal subunit.

This protein is one of the early assembly proteins of the 50S ribosomal subunit, although it is not seen to bind rRNA by itself. It is important during the early stages of 50S assembly. This chain is Large ribosomal subunit protein uL13, found in Lactobacillus acidophilus (strain ATCC 700396 / NCK56 / N2 / NCFM).